Here is a 249-residue protein sequence, read N- to C-terminus: Voltage-gated potassium channel subunit beta-3 (249 aa).

NADP(+)-binding residues include asparagine 44, serine 74, arginine 75, glutamine 100, tryptophan 129, serine 130, proline 131, leucine 132, alanine 133, cysteine 134, lysine 140, lysine 150, glycine 209, serine 211, glutamine 215, and glutamate 218.

This sequence belongs to the shaker potassium channel beta subunit family. Forms heteromultimeric complex with alpha subunits. Interacts with KCNA5 and KCNB2. In terms of tissue distribution, strong expression in brain, with highest levels in neocortical and allocortical regions, hippocampus, olfactory bulb and cerebellum. Also strong in kidney. Weak expression in lung, skeletal muscle and heart.

It is found in the cytoplasm. Regulatory subunit of the voltage-gated potassium (Kv) channels composed of pore-forming and potassium-conducting alpha subunits and of regulatory beta subunit. The beta-3/KCNAB3 subunit may mediate closure of potassium channels. Enhances the expression of Kv2.2/KCNB2 alpha subunit-containing Kv channels but not Kv2.1/KCNB1. May display nicotinamide adenine dinucleotide phosphate (NADPH)-dependent aldoketoreductase activity. The binding of oxidized and reduced NADP(H) cofactors may be required for the regulation of potassium channel activity. This Mus musculus (Mouse) protein is Voltage-gated potassium channel subunit beta-3.